The following is a 518-amino-acid chain: GMP synthase [glutamine-hydrolyzing] (518 aa).

Residues 13 to 203 enclose the Glutamine amidotransferase type-1 domain; the sequence is KIIVLDFGSQ…ALNICGCKGD (191 aa). Residue Cys90 is the Nucleophile of the active site. Catalysis depends on residues His177 and Glu179. The region spanning 204–393 is the GMPS ATP-PPase domain; the sequence is WTMENFSEVE…LGMPDAIVWR (190 aa). Residue 231–237 coordinates ATP; sequence SGGVDSS.

Homodimer.

It catalyses the reaction XMP + L-glutamine + ATP + H2O = GMP + L-glutamate + AMP + diphosphate + 2 H(+). Its pathway is purine metabolism; GMP biosynthesis; GMP from XMP (L-Gln route): step 1/1. Catalyzes the synthesis of GMP from XMP. The sequence is that of GMP synthase [glutamine-hydrolyzing] from Listeria innocua serovar 6a (strain ATCC BAA-680 / CLIP 11262).